Here is a 138-residue protein sequence, read N- to C-terminus: Large ribosomal subunit protein uL29 (138 aa).

The interval 1–79 is large ribosomal subunit protein uL29; it reads MAKSKMLDLR…TNKVIKADYN (79 aa). The segment at 80–138 is unknown; sequence KAVEEAEKAGKEVRAKQRKFLEEQYGQQSQTKVNEADIQKAMQAAEQETVEPDTKGETK. The tract at residues 103-138 is disordered; it reads QYGQQSQTKVNEADIQKAMQAAEQETVEPDTKGETK.

It belongs to the universal ribosomal protein uL29 family.

This Mycoplasma capricolum subsp. capricolum (strain California kid / ATCC 27343 / NCTC 10154) protein is Large ribosomal subunit protein uL29.